Here is a 486-residue protein sequence, read N- to C-terminus: N-succinylglutamate 5-semialdehyde dehydrogenase (486 aa).

220-225 contacts NAD(+); that stretch reads GSSRTG. Residues glutamate 243 and cysteine 277 contribute to the active site.

This sequence belongs to the aldehyde dehydrogenase family. AstD subfamily.

It catalyses the reaction N-succinyl-L-glutamate 5-semialdehyde + NAD(+) + H2O = N-succinyl-L-glutamate + NADH + 2 H(+). The protein operates within amino-acid degradation; L-arginine degradation via AST pathway; L-glutamate and succinate from L-arginine: step 4/5. In terms of biological role, catalyzes the NAD-dependent reduction of succinylglutamate semialdehyde into succinylglutamate. This is N-succinylglutamate 5-semialdehyde dehydrogenase from Shewanella baltica (strain OS223).